Here is a 799-residue protein sequence, read N- to C-terminus: Histidine biosynthesis trifunctional protein (799 aa).

A phosphoribosyl-AMP cyclohydrolase region spans residues 1–229; the sequence is MVLPILPLID…FIVEQENVGF (229 aa). The interval 230-312 is phosphoribosyl-ATP pyrophosphohydrolase; sequence CHLETMSCFG…FYFALAKLVT (83 aa). The histidinol dehydrogenase stretch occupies residues 313 to 799; it reads NNVSLKDVEN…KLGLIPKDFQ (487 aa). Positions 618 and 621 each coordinate Zn(2+). Catalysis depends on residues Glu-687 and His-688. 2 residues coordinate Zn(2+): Asp-721 and His-780.

This sequence in the C-terminal section; belongs to the histidinol dehydrogenase family. Zn(2+) serves as cofactor.

The catalysed reaction is 1-(5-phospho-beta-D-ribosyl)-5'-AMP + H2O = 1-(5-phospho-beta-D-ribosyl)-5-[(5-phospho-beta-D-ribosylamino)methylideneamino]imidazole-4-carboxamide. The enzyme catalyses 1-(5-phospho-beta-D-ribosyl)-ATP + H2O = 1-(5-phospho-beta-D-ribosyl)-5'-AMP + diphosphate + H(+). It carries out the reaction L-histidinol + 2 NAD(+) + H2O = L-histidine + 2 NADH + 3 H(+). It participates in amino-acid biosynthesis; L-histidine biosynthesis; L-histidine from 5-phospho-alpha-D-ribose 1-diphosphate: step 2/9. The protein operates within amino-acid biosynthesis; L-histidine biosynthesis; L-histidine from 5-phospho-alpha-D-ribose 1-diphosphate: step 3/9. It functions in the pathway amino-acid biosynthesis; L-histidine biosynthesis; L-histidine from 5-phospho-alpha-D-ribose 1-diphosphate: step 9/9. This Saccharomyces bayanus (Yeast) protein is Histidine biosynthesis trifunctional protein (HIS4).